The following is a 407-amino-acid chain: SERPINE1 mRNA-binding protein 1 (407 aa).

Phosphoserine is present on S25. The tract at residues 33-227 is disordered; the sequence is AAENKKKEAG…GSGSHNWGTV (195 aa). Positions 51-68 are enriched in low complexity; sequence AKSAAQAAAQTNSNAAGK. N6-acetyllysine; alternate is present on K52. A Glycyl lysine isopeptide (Lys-Gly) (interchain with G-Cter in SUMO1); alternate cross-link involves residue K52. At K68 the chain carries N6-acetyllysine. Composition is skewed to basic and acidic residues over residues 70 to 80, 89 to 114, and 122 to 162; these read LRKESQKDRKN, ADKK…RRPD, and KLID…ERPI. K102 is covalently cross-linked (Glycyl lysine isopeptide (Lys-Gly) (interchain with G-Cter in SUMO2)). Residues K122 and K140 each carry the N6-acetyllysine modification. Gly residues predominate over residues 164-182; that stretch reads GRGGLGRGRGGRGRGMGRG. An omega-N-methylarginine mark is found at R165 and R188. Positions 183–199 are enriched in basic and acidic residues; sequence DGFDSRGKREFDRHSGS. Phosphoserine is present on residues S197, S199, S203, S205, and S208. K211 is modified (N6-acetyllysine; alternate). Residue K211 forms a Glycyl lysine isopeptide (Lys-Gly) (interchain with G-Cter in SUMO2); alternate linkage. Omega-N-methylarginine is present on R216. At S221 the chain carries Phosphoserine. Residue T226 is modified to Phosphothreonine. Residue K228 forms a Glycyl lysine isopeptide (Lys-Gly) (interchain with G-Cter in SUMO1); alternate linkage. K228 participates in a covalent cross-link: Glycyl lysine isopeptide (Lys-Gly) (interchain with G-Cter in SUMO2); alternate. Residues L231, S234, and Y237 each carry the phosphoserine modification. S234 carries the phosphothreonine modification. K240 is modified (phosphothreonine). The segment covering 242–256 has biased composition (polar residues); that stretch reads ISYNCSDLDQSNVTE. Disordered stretches follow at residues 242-288 and 327-407; these read ISYN…KEMT and SKSE…PALA. Basic and acidic residues predominate over residues 261–274; it reads GEEHPVADTENKEN. K280 is covalently cross-linked (Glycyl lysine isopeptide (Lys-Gly) (interchain with G-Cter in SUMO2)). A compositionally biased stretch (basic and acidic residues) spans 327–341; sequence SKSEEAHAEDSVMDH. Residue K328 is modified to N6-acetyllysine. Position 329 is a phosphoserine (S329). A compositionally biased stretch (gly residues) spans 362–371; that stretch reads GRPGRGGRGG. An omega-N-methylarginine mark is found at R363, R366, and R369. S391 and S393 each carry phosphoserine.

Belongs to the SERBP1-HABP4 family. As to quaternary structure, associates with mature 80S ribosomes. Interacts with EEF2/eEF2; interaction sequesters EEF2/eEF2 at the A-site of the ribosome, thereby blocking the interaction sites of the mRNA-tRNA complex, promoting ribosome stabilization and hibernation. Interacts with SPIN1. Interacts with CHD3 and TDRD3. Interacts with ZDHHC17 (via ANK repeats). Phosphorylation by MTOR inhibits SERBP1 and relieves ribosome hibernation.

It localises to the cytoplasm. The protein resides in the nucleus. The protein localises to the perinuclear region. Ribosome-binding protein that promotes ribosome hibernation, a process during which ribosomes are stabilized in an inactive state and preserved from proteasomal degradation. Acts via its association with EEF2/eEF2 factor, sequestering EEF2/eEF2 at the A-site of the ribosome and promoting ribosome stabilization and storage in an inactive state. May also play a role in the regulation of mRNA stability: binds to the 3'-most 134 nt of the SERPINE1/PAI1 mRNA, a region which confers cyclic nucleotide regulation of message decay. Seems to play a role in PML-nuclear bodies formation. The protein is SERPINE1 mRNA-binding protein 1 of Mus musculus (Mouse).